Consider the following 220-residue polypeptide: Deoxyribose-phosphate aldolase (220 aa).

The active-site Proton donor/acceptor is the D89. K151 acts as the Schiff-base intermediate with acetaldehyde in catalysis. Residue K180 is the Proton donor/acceptor of the active site.

The protein belongs to the DeoC/FbaB aldolase family. DeoC type 1 subfamily.

It is found in the cytoplasm. It catalyses the reaction 2-deoxy-D-ribose 5-phosphate = D-glyceraldehyde 3-phosphate + acetaldehyde. It participates in carbohydrate degradation; 2-deoxy-D-ribose 1-phosphate degradation; D-glyceraldehyde 3-phosphate and acetaldehyde from 2-deoxy-alpha-D-ribose 1-phosphate: step 2/2. Catalyzes a reversible aldol reaction between acetaldehyde and D-glyceraldehyde 3-phosphate to generate 2-deoxy-D-ribose 5-phosphate. This is Deoxyribose-phosphate aldolase from Streptococcus mutans serotype c (strain ATCC 700610 / UA159).